The primary structure comprises 573 residues: Solute carrier family 41 member 2 (573 aa).

The Extracellular segment spans residues 1-162 (MTNSKGRSIT…KESSGIMALQ (162 aa)). Phosphoserine occurs at positions 136 and 137. Residues 163–183 (ILVPFLLAGFGTVSAGMVLDI) form a helical membrane-spanning segment. Topologically, residues 184–195 (VQHWEVFRKVTE) are cytoplasmic. The helical transmembrane segment at 196 to 216 (VFILVPALLGLKGNLEMTLAS) threads the bilayer. Residues 217–245 (RLSTAVNIGKMDSPIEKWNLIIGNLALKQ) lie on the Extracellular side of the membrane. A helical transmembrane segment spans residues 246-266 (VQATVVGFLAAVAAIILGWIP). Residues 267–282 (EGKYYLDHSILLCSSS) are Cytoplasmic-facing. The chain crosses the membrane as a helical span at residues 283 to 303 (VATAFIASLLQGIIMVGVIVG). Residues 304–313 (SKKTGINPDN) lie on the Extracellular side of the membrane. The chain crosses the membrane as a helical span at residues 314–334 (VATPIAASFGDLITLAILAWI). Over 335 to 347 (SQGLYSCLETYYY) the chain is Cytoplasmic. A helical transmembrane segment spans residues 348 to 368 (ISPLVGVFFLALTPIWIIIAA). Topologically, residues 369-376 (KHPATRTV) are extracellular. Residues 377–397 (LHSGWEPVITAMVISSIGGLI) traverse the membrane as a helical segment. Topologically, residues 398–406 (LDTTVSDPN) are cytoplasmic. Residues 407-427 (LVGIVVYTPVINGIGGNLVAI) traverse the membrane as a helical segment. Residues 428-469 (QASRISTYLHLHSIPGELPDEPKGCYYPFRTFFGPGVNNKSA) are Extracellular-facing. The helical transmembrane segment at 470–490 (QVLLLLVIPGHLIFLYTIHLM) threads the bilayer. Residues 491–498 (KSGHTSLT) are Cytoplasmic-facing. The chain crosses the membrane as a helical span at residues 499–519 (IIFIVVYLFAAVLQVFTLLWI). At 520–543 (ADWMVHHFWRKGKDPDSFSIPYLT) the chain is on the extracellular side. A helical transmembrane segment spans residues 544–564 (ALGDLLGTALLALSFHFLWLI). Residues 565 to 573 (GDRDGDVGD) are Cytoplasmic-facing.

The protein belongs to the SLC41A transporter family.

The protein localises to the cell membrane. The catalysed reaction is Mg(2+)(in) = Mg(2+)(out). The enzyme catalyses Mn(2+)(in) = Mn(2+)(out). It carries out the reaction Co(2+)(in) = Co(2+)(out). It catalyses the reaction Ni(2+)(in) = Ni(2+)(out). The catalysed reaction is Fe(2+)(in) = Fe(2+)(out). Its function is as follows. Acts as a plasma-membrane magnesium transporter. Can also mediate the transport of other divalent metal cations in an order of Ba(2+) &gt; Ni(2+) &gt; Co(2+) &gt; Fe(2+) &gt; Mn(2+). In Macaca fascicularis (Crab-eating macaque), this protein is Solute carrier family 41 member 2 (SLC41A2).